The primary structure comprises 99 residues: Large ribosomal subunit protein uL23c (99 aa).

This sequence belongs to the universal ribosomal protein uL23 family. As to quaternary structure, part of the 50S ribosomal subunit.

The protein resides in the plastid. It is found in the chloroplast. Functionally, binds to 23S rRNA. The chain is Large ribosomal subunit protein uL23c (rpl23) from Emiliania huxleyi (Coccolithophore).